Reading from the N-terminus, the 1061-residue chain is Error-prone DNA polymerase (1061 aa).

This sequence belongs to the DNA polymerase type-C family. DnaE2 subfamily.

The protein resides in the cytoplasm. The catalysed reaction is DNA(n) + a 2'-deoxyribonucleoside 5'-triphosphate = DNA(n+1) + diphosphate. Its function is as follows. DNA polymerase involved in damage-induced mutagenesis and translesion synthesis (TLS). It is not the major replicative DNA polymerase. This chain is Error-prone DNA polymerase, found in Bdellovibrio bacteriovorus (strain ATCC 15356 / DSM 50701 / NCIMB 9529 / HD100).